Reading from the N-terminus, the 379-residue chain is UDP-4-amino-4-deoxy-L-arabinose--oxoglutarate aminotransferase (379 aa).

Lysine 182 carries the post-translational modification N6-(pyridoxal phosphate)lysine.

It belongs to the DegT/DnrJ/EryC1 family. ArnB subfamily. As to quaternary structure, homodimer. It depends on pyridoxal 5'-phosphate as a cofactor.

It carries out the reaction UDP-4-amino-4-deoxy-beta-L-arabinose + 2-oxoglutarate = UDP-beta-L-threo-pentopyranos-4-ulose + L-glutamate. It functions in the pathway nucleotide-sugar biosynthesis; UDP-4-deoxy-4-formamido-beta-L-arabinose biosynthesis; UDP-4-deoxy-4-formamido-beta-L-arabinose from UDP-alpha-D-glucuronate: step 2/3. Its pathway is bacterial outer membrane biogenesis; lipopolysaccharide biosynthesis. Functionally, catalyzes the conversion of UDP-4-keto-arabinose (UDP-Ara4O) to UDP-4-amino-4-deoxy-L-arabinose (UDP-L-Ara4N). The modified arabinose is attached to lipid A and is required for resistance to polymyxin and cationic antimicrobial peptides. This is UDP-4-amino-4-deoxy-L-arabinose--oxoglutarate aminotransferase from Klebsiella pneumoniae (strain 342).